A 1093-amino-acid polypeptide reads, in one-letter code: GPI ethanolamine phosphate transferase 3, catalytic subunit (1093 aa).

The helical transmembrane segment at 4-24 (VSVLLFLAWVCFLFYAGIALF) threads the bilayer. N-linked (GlcNAc...) asparagine glycosylation occurs at asparagine 268. The next 9 helical transmembrane spans lie at 460–480 (AAAC…GFLF), 483–503 (LLLI…GVSV), 512–532 (VVLG…KAWV), 669–689 (LWYG…RLWL), 702–722 (VLFV…YWAL), 748–768 (VMGL…TVLV), 831–851 (SVYS…LMLL), 856–876 (VSLV…LLAA), and 945–965 (FASH…PFLC). Residues 971 to 991 (KRRQPLPGSESEARVRPEEEE) are disordered. 2 consecutive transmembrane segments (helical) span residues 1018-1038 (LKYL…ASIL) and 1052-1072 (FIFE…GIAL).

This sequence belongs to the PIGG/PIGN/PIGO family. PIGO subfamily. Forms the ethanolamine phosphate transferase 3 complex composed by PIGO and PIGF. PIGF is required to stabilize PIGO.

It is found in the endoplasmic reticulum membrane. It participates in glycolipid biosynthesis; glycosylphosphatidylinositol-anchor biosynthesis. In terms of biological role, catalytic subunit of the ethanolamine phosphate transferase 3 complex that transfers an ethanolamine phosphate (EtNP) from a phosphatidylethanolamine (PE) to the 6-OH position of the third alpha-1,2-linked mannose of the an alpha-D-Man-(1-&gt;2)-alpha-D-Man-(1-&gt;6)-2-PEtn-alpha-D-Man-(1-&gt;4)-alpha-D-GlcN-(1-&gt;6)-(1-radyl,2-acyl-sn-glycero-3-phospho)-2-acyl-inositol (also termed H6) intermediate to generate a 6-PEtn-alpha-D-Man-(1-&gt;2)-alpha-D-Man-(1-&gt;6)-2-PEtn-alpha-D-Man-(1-&gt;4)-alpha-D-GlcN-(1-&gt;6)-(1-radyl,2-acyl-sn-glycero-3-phospho)-2-acyl-inositol (also termed H7) and participates in the tenth step of the glycosylphosphatidylinositol-anchor biosynthesis. This is GPI ethanolamine phosphate transferase 3, catalytic subunit from Mus musculus (Mouse).